The following is a 213-amino-acid chain: Cytidylate kinase (213 aa).

ATP is bound at residue 9–17 (GPAASGKGT).

It belongs to the cytidylate kinase family. Type 1 subfamily.

It localises to the cytoplasm. The catalysed reaction is CMP + ATP = CDP + ADP. The enzyme catalyses dCMP + ATP = dCDP + ADP. The polypeptide is Cytidylate kinase (Caulobacter vibrioides (strain ATCC 19089 / CIP 103742 / CB 15) (Caulobacter crescentus)).